A 707-amino-acid chain; its full sequence is Ribosomal RNA large subunit methyltransferase K/L (707 aa).

The region spanning 44 to 155 (VIYNLCLWSR…NDILTVSFDL (112 aa)) is the THUMP domain.

It belongs to the methyltransferase superfamily. RlmKL family.

Its subcellular location is the cytoplasm. The enzyme catalyses guanosine(2445) in 23S rRNA + S-adenosyl-L-methionine = N(2)-methylguanosine(2445) in 23S rRNA + S-adenosyl-L-homocysteine + H(+). It carries out the reaction guanosine(2069) in 23S rRNA + S-adenosyl-L-methionine = N(2)-methylguanosine(2069) in 23S rRNA + S-adenosyl-L-homocysteine + H(+). Its function is as follows. Specifically methylates the guanine in position 2445 (m2G2445) and the guanine in position 2069 (m7G2069) of 23S rRNA. In Legionella pneumophila (strain Paris), this protein is Ribosomal RNA large subunit methyltransferase K/L.